Here is a 479-residue protein sequence, read N- to C-terminus: Aryl-phospho-beta-D-glucosidase BglA (479 aa).

E176 (proton donor) is an active-site residue. E377 (nucleophile) is an active-site residue.

This sequence belongs to the glycosyl hydrolase 1 family.

It carries out the reaction 6-phospho-beta-D-glucosyl-(1-&gt;4)-D-glucose + H2O = D-glucose 6-phosphate + D-glucose. Functionally, catalyzes the hydrolysis of aryl-phospho-beta-D-glucosides such as 4-methylumbelliferyl-phospho-beta-D-glucopyranoside (MUG-P), phosphoarbutin and phosphosalicin. Plays a major role in the utilization of arbutin or salicin as the sole carbon source. BglA and BglH are the major proteins contributing to hydrolysis of MUG-P by extracts of late-exponential-phase or stationary-phase B.subtilis cells. The protein is Aryl-phospho-beta-D-glucosidase BglA (bglA) of Bacillus subtilis (strain 168).